Consider the following 201-residue polypeptide: Recombination protein RecR (201 aa).

A C4-type zinc finger spans residues 57–72 (CADCRTFTEQDVCNIC). The 96-residue stretch at 81–176 (GQICVVESPA…EASRIAHGVP (96 aa)) folds into the Toprim domain.

This sequence belongs to the RecR family.

In terms of biological role, may play a role in DNA repair. It seems to be involved in an RecBC-independent recombinational process of DNA repair. It may act with RecF and RecO. This chain is Recombination protein RecR, found in Citrobacter koseri (strain ATCC BAA-895 / CDC 4225-83 / SGSC4696).